Reading from the N-terminus, the 150-residue chain is UPF0336 protein SAV_4901 (150 aa).

A MaoC-like domain is found at 8 to 126; it reads VGRSYPPTDP…GNDVVDVRGE (119 aa).

This sequence belongs to the UPF0336 family.

The polypeptide is UPF0336 protein SAV_4901 (Streptomyces avermitilis (strain ATCC 31267 / DSM 46492 / JCM 5070 / NBRC 14893 / NCIMB 12804 / NRRL 8165 / MA-4680)).